A 419-amino-acid polypeptide reads, in one-letter code: S-adenosylmethionine synthase (419 aa).

H14 contributes to the ATP binding site. D16 contacts Mg(2+). Position 42 (E42) interacts with K(+). E55 and Q98 together coordinate L-methionine. Residues 98-108 (QSADINQGVDR) are flexible loop. ATP-binding positions include 164–166 (DAK), 242–243 (KF), D251, 257–258 (RK), A274, and K278. D251 is an L-methionine binding site. K282 serves as a coordination point for L-methionine.

It belongs to the AdoMet synthase family. In terms of assembly, homotetramer; dimer of dimers. Requires Mg(2+) as cofactor. K(+) is required as a cofactor.

The protein resides in the cytoplasm. It catalyses the reaction L-methionine + ATP + H2O = S-adenosyl-L-methionine + phosphate + diphosphate. The protein operates within amino-acid biosynthesis; S-adenosyl-L-methionine biosynthesis; S-adenosyl-L-methionine from L-methionine: step 1/1. Functionally, catalyzes the formation of S-adenosylmethionine (AdoMet) from methionine and ATP. The overall synthetic reaction is composed of two sequential steps, AdoMet formation and the subsequent tripolyphosphate hydrolysis which occurs prior to release of AdoMet from the enzyme. This is S-adenosylmethionine synthase from Cytophaga hutchinsonii (strain ATCC 33406 / DSM 1761 / CIP 103989 / NBRC 15051 / NCIMB 9469 / D465).